We begin with the raw amino-acid sequence, 389 residues long: Leucine aminopeptidase 1 (389 aa).

A signal peptide spans 1–18 (MKSAALLLPLYTAAFAAA). Positions 19–89 (AFHHEHAQAV…TLNHRINAES (71 aa)) are excised as a propeptide. 3 N-linked (GlcNAc...) asparagine glycosylation sites follow: Asn99, Asn146, and Asn156. Zn(2+) is bound by residues His188, Asp207, Glu246, and Asp273. Cys322 and Cys326 are oxidised to a cystine. His355 lines the Zn(2+) pocket.

The protein belongs to the peptidase M28 family. M28E subfamily. As to quaternary structure, monomer. Zn(2+) serves as cofactor.

The protein localises to the secreted. Its function is as follows. Extracellular aminopeptidase that allows assimilation of proteinaceous substrates. The protein is Leucine aminopeptidase 1 (lap1) of Pyrenophora tritici-repentis (strain Pt-1C-BFP) (Wheat tan spot fungus).